A 309-amino-acid polypeptide reads, in one-letter code: Porphobilinogen deaminase (309 aa).

C242 carries the post-translational modification S-(dipyrrolylmethanemethyl)cysteine.

The protein belongs to the HMBS family. Monomer. Dipyrromethane serves as cofactor.

It catalyses the reaction 4 porphobilinogen + H2O = hydroxymethylbilane + 4 NH4(+). It participates in porphyrin-containing compound metabolism; protoporphyrin-IX biosynthesis; coproporphyrinogen-III from 5-aminolevulinate: step 2/4. Functionally, tetrapolymerization of the monopyrrole PBG into the hydroxymethylbilane pre-uroporphyrinogen in several discrete steps. This chain is Porphobilinogen deaminase, found in Pseudoalteromonas atlantica (strain T6c / ATCC BAA-1087).